Consider the following 530-residue polypeptide: Arginine--tRNA ligase (530 aa).

The short motif at 113-123 is the 'HIGH' region element; it reads ANPTGPLHIGH.

The protein belongs to the class-I aminoacyl-tRNA synthetase family. In terms of assembly, monomer.

It is found in the cytoplasm. The catalysed reaction is tRNA(Arg) + L-arginine + ATP = L-arginyl-tRNA(Arg) + AMP + diphosphate. This chain is Arginine--tRNA ligase, found in Campylobacter jejuni subsp. jejuni serotype O:23/36 (strain 81-176).